The primary structure comprises 123 residues: Cytochrome b-c1 complex subunit 7 (123 aa).

The protein belongs to the UQCRB/QCR7 family. In terms of assembly, component of the ubiquinol-cytochrome c oxidoreductase (cytochrome b-c1 complex, complex III, CIII), a multisubunit enzyme composed of 3 respiratory subunits cytochrome b, cytochrome c1 and Rieske protein, 2 core protein subunits, and additional low-molecular weight protein subunits. The complex exists as an obligatory dimer and forms supercomplexes (SCs) in the inner mitochondrial membrane with cytochrome c oxidase (complex IV, CIV). In terms of processing, the N-terminus is blocked.

The protein resides in the mitochondrion inner membrane. Its function is as follows. Component of the ubiquinol-cytochrome c oxidoreductase, a multisubunit transmembrane complex that is part of the mitochondrial electron transport chain which drives oxidative phosphorylation. The respiratory chain contains 3 multisubunit complexes succinate dehydrogenase (complex II, CII), ubiquinol-cytochrome c oxidoreductase (cytochrome b-c1 complex, complex III, CIII) and cytochrome c oxidase (complex IV, CIV), that cooperate to transfer electrons derived from NADH and succinate to molecular oxygen, creating an electrochemical gradient over the inner membrane that drives transmembrane transport and the ATP synthase. The cytochrome b-c1 complex catalyzes electron transfer from ubiquinol to cytochrome c, linking this redox reaction to translocation of protons across the mitochondrial inner membrane, with protons being carried across the membrane as hydrogens on the quinol. In the process called Q cycle, 2 protons are consumed from the matrix, 4 protons are released into the intermembrane space and 2 electrons are passed to cytochrome c. The sequence is that of Cytochrome b-c1 complex subunit 7 from Solanum tuberosum (Potato).